The following is a 421-amino-acid chain: Probable UDP-arabinose 4-epimerase 1 (421 aa).

Topologically, residues 1–33 (MLPTNRNRPQQRPARSWYFISDMDFSDPKRKPR) are cytoplasmic. The helical; Signal-anchor for type II membrane protein transmembrane segment at 34–53 (YLSKILMVALLTAMCVVMLT) threads the bilayer. Residues 54–421 (QPPCHRRTPS…GYGPPQAMVL (368 aa)) are Lumenal-facing. Residue 74–105 (HVLVTGGAGYIGSHAALRLLKDSFRVTIVDNL) participates in NAD(+) binding. Catalysis depends on Tyr-222, which acts as the Proton acceptor.

The protein belongs to the NAD(P)-dependent epimerase/dehydratase family. Requires NAD(+) as cofactor.

The protein resides in the golgi apparatus. The protein localises to the golgi stack membrane. The enzyme catalyses UDP-beta-L-arabinopyranose = UDP-alpha-D-xylose. The protein operates within nucleotide-sugar biosynthesis; UDP-L-arabinose biosynthesis; UDP-L-arabinose from UDP-alpha-D-xylose: step 1/1. Its pathway is cell wall biogenesis; cell wall polysaccharide biosynthesis. The sequence is that of Probable UDP-arabinose 4-epimerase 1 (UEL-1) from Oryza sativa subsp. japonica (Rice).